A 142-amino-acid polypeptide reads, in one-letter code: Membrane protein YneK (142 aa).

The chain crosses the membrane as a helical span at residues 6 to 26 (FLWFILFWVIMMVVLLSIGGF).

Interacts with the N-terminal D1 domain of dynamin-like protein DynA.

It localises to the cell membrane. This is Membrane protein YneK (yneK) from Bacillus subtilis (strain 168).